A 240-amino-acid polypeptide reads, in one-letter code: MLPFWIALQFLSSLPVSLPGMPAPREVGRSLLYYPLVGLLFGLLLWLASHLLQGTPSPLHAALLLTLWVLLSGALHLDGLADSADAWLGGFGDRERTLRIMKDPRSGPIAVVTLVLVLLLKFCALWVLVGQGIGAQLLLAPLIGRAAMLGLFLGTPYVRPGGLGQALAEHLPRRAAGWVLLVCVLFCLFLGGWSVLLALAVFAWLRHLMCRRLGGTTGDTAGALLELLELAVVLGLALGL.

5 helical membrane passes run 31 to 51, 62 to 81, 109 to 129, 133 to 153, and 179 to 199; these read LLYYPLVGLLFGLLLWLASHL, ALLLTLWVLLSGALHLDGLA, IAVVTLVLVLLLKFCALWVLV, IGAQLLLAPLIGRAAMLGLFL, and VLLVCVLFCLFLGGWSVLLAL.

It belongs to the CobS family. Mg(2+) serves as cofactor.

It is found in the cell inner membrane. It carries out the reaction alpha-ribazole + adenosylcob(III)inamide-GDP = adenosylcob(III)alamin + GMP + H(+). The catalysed reaction is alpha-ribazole 5'-phosphate + adenosylcob(III)inamide-GDP = adenosylcob(III)alamin 5'-phosphate + GMP + H(+). The protein operates within cofactor biosynthesis; adenosylcobalamin biosynthesis; adenosylcobalamin from cob(II)yrinate a,c-diamide: step 7/7. In terms of biological role, joins adenosylcobinamide-GDP and alpha-ribazole to generate adenosylcobalamin (Ado-cobalamin). Also synthesizes adenosylcobalamin 5'-phosphate from adenosylcobinamide-GDP and alpha-ribazole 5'-phosphate. The protein is Adenosylcobinamide-GDP ribazoletransferase of Pseudomonas putida (strain ATCC 700007 / DSM 6899 / JCM 31910 / BCRC 17059 / LMG 24140 / F1).